A 383-amino-acid polypeptide reads, in one-letter code: MNAGPSWNKVQHSKNSSGKRQSKSQVPHASSQPRSSLTAVTQPTEEKLKESISPEARRKRNPLGSRCQGASGNKLFLDFQSMKIIKENADEDSASDLSDSERIPIPPSPLTPPDLNLRAEEIDPVYFDLHPGQGHTKPEYYYPNFLPSPFSSWDLRDMALLLNAENKTEAVPRVGGLLGKYIDRLIQLEWLQVQTVQCEKAKGGKARPPTAPGTSGALKSPGRSKLIASALSKPLPHQEGASKSGPSRKKAFHHEEIHPSHYAFETSPRPIDVLGGTRFCSQRQTLEMRTEEKKKKSSKSTKLQRWDLSGSGSSSKVETSGHIRVPKQAAVILDSADSCKASKTQAHAHPRKKGKAESCGHATVSSEKKLKTNGVKQNTYKLK.

6 disordered regions span residues 1-70 (MNAG…CQGA), 89-115 (ADED…PPDL), 200-222 (KAKG…KSPG), 232-251 (SKPL…RKKA), 284-325 (QTLE…HIRV), and 338-383 (SCKA…YKLK). A compositionally biased stretch (polar residues) spans 8–43 (NKVQHSKNSSGKRQSKSQVPHASSQPRSSLTAVTQP). A compositionally biased stretch (basic and acidic residues) spans 44–56 (TEEKLKESISPEA). A compositionally biased stretch (polar residues) spans 374–383 (GVKQNTYKLK).

The protein belongs to the FAM217 family.

The chain is Protein FAM217B (FAM217B) from Homo sapiens (Human).